The primary structure comprises 506 residues: Maturase K (506 aa).

This sequence belongs to the intron maturase 2 family. MatK subfamily.

Its subcellular location is the plastid. The protein resides in the chloroplast. In terms of biological role, usually encoded in the trnK tRNA gene intron. Probably assists in splicing its own and other chloroplast group II introns. The protein is Maturase K of Trifolium hirtum (Rose clover).